A 560-amino-acid chain; its full sequence is MSTSVFNRRWATLLLESLTRHGVRHICIAPGSRSTPLTLSAADNHALICHTHFDERGLGHLALGLAKASREPVAIIVTSGTAAANLYPAIIEAGLTGERLVVLTADRPPELIDCGANQAIRQHALYASHPTLALDLPRPTPDIPATWLVSSVDSAMARLTHGALHINCPFAEPLYGADDGTAYQDWLMTLGDWWNSREPWLREMRQSTLVVQPDWPQWRQKRGVVLAGRVSAEQGARLAAWANELGWPLIGDVLSQSGQPLPCADIWLAHPEAASLLRQAEIVLQFGGSLTGKRLLQWQEQCQPQEFWLIDDLPGRLDPAHHRGRRLVADVGEWLSAHPADKQTPWADLLVDIADRTQRQVDAHLASHFGEAQLAQRIPALLPPDGQLFVGNSLVVRLIDALAQLPQGYPVYGNRGASGIDGLISTLAGVQRATAKATLGIVGDLSALYDLNALALLRQSPAPLVLIVVNNNGGQIFSLLPTPVAQREAFYCMPQNVEFGHAAAMFGLNYVRAESWEQLADTVSDCWTQGGVTLLEVVVEPKDGAETLNELVAQVAAWTH.

Belongs to the TPP enzyme family. MenD subfamily. Homodimer. The cofactor is Mg(2+). Requires Mn(2+) as cofactor. Thiamine diphosphate serves as cofactor.

The enzyme catalyses isochorismate + 2-oxoglutarate + H(+) = 5-enolpyruvoyl-6-hydroxy-2-succinyl-cyclohex-3-ene-1-carboxylate + CO2. Its pathway is quinol/quinone metabolism; 1,4-dihydroxy-2-naphthoate biosynthesis; 1,4-dihydroxy-2-naphthoate from chorismate: step 2/7. It functions in the pathway quinol/quinone metabolism; menaquinone biosynthesis. In terms of biological role, catalyzes the thiamine diphosphate-dependent decarboxylation of 2-oxoglutarate and the subsequent addition of the resulting succinic semialdehyde-thiamine pyrophosphate anion to isochorismate to yield 2-succinyl-5-enolpyruvyl-6-hydroxy-3-cyclohexene-1-carboxylate (SEPHCHC). The sequence is that of 2-succinyl-5-enolpyruvyl-6-hydroxy-3-cyclohexene-1-carboxylate synthase from Pectobacterium atrosepticum (strain SCRI 1043 / ATCC BAA-672) (Erwinia carotovora subsp. atroseptica).